Reading from the N-terminus, the 362-residue chain is Peptide chain release factor 1 (362 aa).

At glutamine 238 the chain carries N5-methylglutamine.

Belongs to the prokaryotic/mitochondrial release factor family. Methylated by PrmC. Methylation increases the termination efficiency of RF1.

The protein localises to the cytoplasm. In terms of biological role, peptide chain release factor 1 directs the termination of translation in response to the peptide chain termination codons UAG and UAA. The sequence is that of Peptide chain release factor 1 from Psychrobacter cryohalolentis (strain ATCC BAA-1226 / DSM 17306 / VKM B-2378 / K5).